The primary structure comprises 155 residues: Small ribosomal subunit protein eS19 (155 aa).

The protein belongs to the eukaryotic ribosomal protein eS19 family. As to quaternary structure, component of the small ribosomal subunit.

Its subcellular location is the cytoplasm. Component of the small ribosomal subunit. The ribosome is a large ribonucleoprotein complex responsible for the synthesis of proteins in the cell. Required for proper maturation of the small (40S) ribosomal subunit. The chain is Small ribosomal subunit protein eS19 (RPS19) from Entamoeba histolytica (strain ATCC 30459 / HM-1:IMSS / ABRM).